A 251-amino-acid chain; its full sequence is Hydroxyacylglutathione hydrolase (251 aa).

Zn(2+) is bound by residues H53, H55, D57, H58, H110, D127, and H165.

This sequence belongs to the metallo-beta-lactamase superfamily. Glyoxalase II family. As to quaternary structure, monomer. The cofactor is Zn(2+).

It catalyses the reaction an S-(2-hydroxyacyl)glutathione + H2O = a 2-hydroxy carboxylate + glutathione + H(+). The protein operates within secondary metabolite metabolism; methylglyoxal degradation; (R)-lactate from methylglyoxal: step 2/2. In terms of biological role, thiolesterase that catalyzes the hydrolysis of S-D-lactoyl-glutathione to form glutathione and D-lactic acid. The sequence is that of Hydroxyacylglutathione hydrolase from Shigella dysenteriae serotype 1 (strain Sd197).